The primary structure comprises 339 residues: Transposase for insertion sequence element IS1086 (339 aa).

Positions 176-329 (DRLMPGHWEG…SPLQVLAQVL (154 aa)) constitute an Integrase catalytic domain.

Belongs to the transposase IS30 family.

In terms of biological role, required for the transposition of the insertion element. The protein is Transposase for insertion sequence element IS1086 (IS1086) of Cupriavidus metallidurans (strain ATCC 43123 / DSM 2839 / NBRC 102507 / CH34) (Ralstonia metallidurans).